Consider the following 305-residue polypeptide: UDP-3-O-acyl-N-acetylglucosamine deacetylase (305 aa).

Residues H78, H237, and D241 each contribute to the Zn(2+) site. H264 functions as the Proton donor in the catalytic mechanism.

This sequence belongs to the LpxC family. Zn(2+) serves as cofactor.

It catalyses the reaction a UDP-3-O-[(3R)-3-hydroxyacyl]-N-acetyl-alpha-D-glucosamine + H2O = a UDP-3-O-[(3R)-3-hydroxyacyl]-alpha-D-glucosamine + acetate. It functions in the pathway glycolipid biosynthesis; lipid IV(A) biosynthesis; lipid IV(A) from (3R)-3-hydroxytetradecanoyl-[acyl-carrier-protein] and UDP-N-acetyl-alpha-D-glucosamine: step 2/6. Its function is as follows. Catalyzes the hydrolysis of UDP-3-O-myristoyl-N-acetylglucosamine to form UDP-3-O-myristoylglucosamine and acetate, the committed step in lipid A biosynthesis. The polypeptide is UDP-3-O-acyl-N-acetylglucosamine deacetylase (Paraburkholderia xenovorans (strain LB400)).